Reading from the N-terminus, the 134-residue chain is Cell division protein SepF 1 (134 aa).

The protein belongs to the SepF family. Homodimer. Interacts with FtsZ.

It localises to the cytoplasm. Its function is as follows. Cell division protein that is part of the divisome complex and is recruited early to the Z-ring. Probably stimulates Z-ring formation, perhaps through the cross-linking of FtsZ protofilaments. Its function overlaps with FtsA. This is Cell division protein SepF 1 from Streptomyces avermitilis (strain ATCC 31267 / DSM 46492 / JCM 5070 / NBRC 14893 / NCIMB 12804 / NRRL 8165 / MA-4680).